A 160-amino-acid polypeptide reads, in one-letter code: Keratin-associated protein 13-4 (160 aa).

4 tandem repeats follow at residues 41–50, 51–60, 61–70, and 77–86. The 4 X 10 AA approximate repeats stretch occupies residues 41-86; the sequence is CQLRSSLYRDCQKTCWEPASCQKSCYRPRTSILCCPCQTTCSGSLG.

The protein belongs to the PMG family. In terms of assembly, interacts with hair keratins.

In terms of biological role, in the hair cortex, hair keratin intermediate filaments are embedded in an interfilamentous matrix, consisting of hair keratin-associated proteins (KRTAP), which are essential for the formation of a rigid and resistant hair shaft through their extensive disulfide bond cross-linking with abundant cysteine residues of hair keratins. The matrix proteins include the high-sulfur and high-glycine-tyrosine keratins. The polypeptide is Keratin-associated protein 13-4 (KRTAP13-4) (Homo sapiens (Human)).